Consider the following 1969-residue polypeptide: Protein mono-ADP-ribosyltransferase PARP4 (1969 aa).

The region spanning 1–94 is the BRCT domain; the sequence is MTLGIFANCI…RLLDVRNYDP (94 aa). Residues 19 to 25 carry the Nuclear localization signal motif; the sequence is PRQQKKK. The interval 92 to 132 is disordered; the sequence is YDPLSPAPAAPPAERSRSEVQSEYLPSDNTPEKENTEVTEV. The 129-residue stretch at 235–363 folds into the PARP alpha-helical domain; sequence SEKLQALLLE…ETNLSKPNPP (129 aa). One can recognise a PARP catalytic domain in the interval 362-566; it reads PPSLAKYRAL…FCTPGDQIKE (205 aa). A VIT domain is found at 600–728; the sequence is TNIKAGLQDA…KVLIKITYIT (129 aa). In terms of domain architecture, VWFA spans 869–1039; that stretch reads EVIICLDCSS…KQIEAQMTRI (171 aa). Residue serine 1229 is modified to Phosphoserine. Residues 1230 to 1242 carry the Nuclear localization signal motif; sequence DGHGVLQPVSVSS. 5 stretches are compositionally biased toward pro residues: residues 1372–1387, 1402–1417, 1425–1444, 1485–1513, and 1521–1540; these read PPHPLGGTHPPPPLPL, HPPPPLFGGTLIPPPS, LPPPPPLPGGTHIPPPPPIP, and LPPPPLLPAGTHIPPPPPITGSTHPPPPS. A disordered region spans residues 1372–1608; the sequence is PPHPLGGTHP…AGTQFSLSPI (237 aa). The FH1 domain occupies 1443-1541; it reads IPGGTLIPPS…HIPPPPPIPG (99 aa). Residues 1541–1556 are compositionally biased toward low complexity; sequence GGTLIPSPSSLFGGTH. The span at 1557 to 1585 shows a compositional bias: pro residues; it reads LPPPPLLPAGTHIPPPPPITGSTHPPPPS. Residues 1808-1969 form an interaction with the major vault protein region; the sequence is FCDEDQESPV…LHRILYYSQG (162 aa).

It belongs to the ARTD/PARP family. As to quaternary structure, component of the vault ribonucleoprotein particle, at least composed of MVP, PARP4 and one or more vault RNAs (vRNAs). Interacts with TEP1.

Its subcellular location is the cytoplasm. The protein localises to the nucleus. It carries out the reaction L-aspartyl-[protein] + NAD(+) = 4-O-(ADP-D-ribosyl)-L-aspartyl-[protein] + nicotinamide. The catalysed reaction is L-glutamyl-[protein] + NAD(+) = 5-O-(ADP-D-ribosyl)-L-glutamyl-[protein] + nicotinamide. Its function is as follows. Mono-ADP-ribosyltransferase that mediates mono-ADP-ribosylation of target proteins. This is Protein mono-ADP-ribosyltransferase PARP4 from Mus musculus (Mouse).